Here is a 154-residue protein sequence, read N- to C-terminus: Interleukin-2 (154 aa).

The signal sequence occupies residues 1–20 (MYRMQLLSCIALSLALVTNS). Thr23 is a glycosylation site (O-linked (GalNAc...) threonine). Cys78 and Cys126 are joined by a disulfide.

It belongs to the IL-2 family.

It is found in the secreted. Its function is as follows. Cytokine produced by activated CD4-positive helper T-cells and to a lesser extend activated CD8-positive T-cells and natural killer (NK) cells that plays pivotal roles in the immune response and tolerance. Binds to a receptor complex composed of either the high-affinity trimeric IL-2R (IL2RA/CD25, IL2RB/CD122 and IL2RG/CD132) or the low-affinity dimeric IL-2R (IL2RB and IL2RG). Interaction with the receptor leads to oligomerization and conformation changes in the IL-2R subunits resulting in downstream signaling starting with phosphorylation of JAK1 and JAK3. In turn, JAK1 and JAK3 phosphorylate the receptor to form a docking site leading to the phosphorylation of several substrates including STAT5. This process leads to activation of several pathways including STAT, phosphoinositide-3-kinase/PI3K and mitogen-activated protein kinase/MAPK pathways. Functions as a T-cell growth factor and can increase NK-cell cytolytic activity as well. Promotes strong proliferation of activated B-cells and subsequently immunoglobulin production. Plays a pivotal role in regulating the adaptive immune system by controlling the survival and proliferation of regulatory T-cells, which are required for the maintenance of immune tolerance. Moreover, participates in the differentiation and homeostasis of effector T-cell subsets, including Th1, Th2, Th17 as well as memory CD8-positive T-cells. This Macaca fascicularis (Crab-eating macaque) protein is Interleukin-2 (IL2).